We begin with the raw amino-acid sequence, 449 residues long: Ktr system potassium uptake protein D (449 aa).

The next 10 membrane-spanning stretches (helical) occupy residues 17 to 37 (LIALYYFLAVTVAVILLSLPA), 46 to 66 (TFIDALFTAVSSVSVTGLTVV), 75 to 95 (IGIFILAFVLQFGGIGIMTLG), 133 to 153 (VLFLILWIEFFGGLILGTYFL), 194 to 214 (FVQFITMLLIIFGAIGFPVLV), 235 to 255 (ITTITFGSLVLFGAIGIFALE), 297 to 317 (LFFICALMFIGASPSSVGGGI), 355 to 375 (LVVTMMAILLVFGATLILTIT), 380 to 400 (LLELLFEVCSAFGTTGLSLGI), and 411 to 431 (VIMIVMFIGRIGILTFLYLIG).

Belongs to the TrkH potassium transport family. Ktr (TC 2.A.38.4) subfamily. In terms of assembly, homodimer. Part of the KtrCD complex formed by an octameric catalytic ring of KtrC and a membrane associated dimer of KtrD forming a potassium channel.

The protein resides in the cell membrane. Functionally, integral membrane subunit of the KtrCD potassium uptake transporter. The 2 major potassium transporter complexes KtrAB and KtrCD confer resistance to both suddenly imposed and prolonged osmotic stress. In Bacillus subtilis (strain 168), this protein is Ktr system potassium uptake protein D (ktrD).